Reading from the N-terminus, the 97-residue chain is Cytochrome c oxidase subunit 4 isoform 1, mitochondrial (97 aa).

A mitochondrion-targeting transit peptide spans 1 to 22 (MLATRVFNLIGRRAISTSVCVR). Lys29 carries the N6-acetyllysine; alternate modification. Lys29 is modified (N6-succinyllysine; alternate). Lys53 bears the N6-acetyllysine mark. A phosphoserine mark is found at Ser56 and Ser58. Residue Lys60 is modified to N6-acetyllysine; alternate. Lys60 carries the post-translational modification N6-succinyllysine; alternate. An N6-acetyllysine modification is found at Lys67.

It belongs to the cytochrome c oxidase IV family. In terms of assembly, component of the cytochrome c oxidase (complex IV, CIV), a multisubunit enzyme composed of 14 subunits. The complex is composed of a catalytic core of 3 subunits MT-CO1, MT-CO2 and MT-CO3, encoded in the mitochondrial DNA, and 11 supernumerary subunits COX4I, COX5A, COX5B, COX6A, COX6B, COX6C, COX7A, COX7B, COX7C, COX8 and NDUFA4, which are encoded in the nuclear genome. The complex exists as a monomer or a dimer and forms supercomplexes (SCs) in the inner mitochondrial membrane with NADH-ubiquinone oxidoreductase (complex I, CI) and ubiquinol-cytochrome c oxidoreductase (cytochrome b-c1 complex, complex III, CIII), resulting in different assemblies (supercomplex SCI(1)III(2)IV(1) and megacomplex MCI(2)III(2)IV(2)). Interacts with PHB2; the interaction decreases in absence of SPHK2. Interacts with AFG1L. Interacts with ABCB7; this interaction allows the regulation of cellular iron homeostasis and cellular reactive oxygen species (ROS) levels in cardiomyocytes. Interacts with FLVCR2; this interaction occurs in the absence of heme and is disrupted upon heme binding. Interacts with IRGC.

The protein localises to the mitochondrion inner membrane. It functions in the pathway energy metabolism; oxidative phosphorylation. Component of the cytochrome c oxidase, the last enzyme in the mitochondrial electron transport chain which drives oxidative phosphorylation. The respiratory chain contains 3 multisubunit complexes succinate dehydrogenase (complex II, CII), ubiquinol-cytochrome c oxidoreductase (cytochrome b-c1 complex, complex III, CIII) and cytochrome c oxidase (complex IV, CIV), that cooperate to transfer electrons derived from NADH and succinate to molecular oxygen, creating an electrochemical gradient over the inner membrane that drives transmembrane transport and the ATP synthase. Cytochrome c oxidase is the component of the respiratory chain that catalyzes the reduction of oxygen to water. Electrons originating from reduced cytochrome c in the intermembrane space (IMS) are transferred via the dinuclear copper A center (CU(A)) of subunit 2 and heme A of subunit 1 to the active site in subunit 1, a binuclear center (BNC) formed by heme A3 and copper B (CU(B)). The BNC reduces molecular oxygen to 2 water molecules using 4 electrons from cytochrome c in the IMS and 4 protons from the mitochondrial matrix. The sequence is that of Cytochrome c oxidase subunit 4 isoform 1, mitochondrial (COX4I1) from Sus scrofa (Pig).